The following is a 235-amino-acid chain: MHIAEGVLPPVQCAIWFAAAAPFVVHGAVQVVKQIKHHPENRLLLATAGACTFLLSSIKLPSVTGSSSHPTGTGVGAVLFKPPVMAFMGLIVLIFQALLLAHGGITTLGANTFSMAIVGPWVGYGAYVLNKKLGGPLALGIFLAMFLSDLSTYCVTSFQLAFAYPDPSSGVLGAAEKFLGIFAISQIPLSVAEGILGILLFRFLFKVAGPQLQALGVRIGNKRTANAEVPEVAHV.

6 consecutive transmembrane segments (helical) span residues Gly6–His26, Leu43–Val63, Met85–Ile105, Leu108–Val128, Leu133–Tyr153, and Ile181–Phe201.

Belongs to the CbiM family. Forms an energy-coupling factor (ECF) transporter complex composed of an ATP-binding protein (A component, CbiO), a transmembrane protein (T component, CbiQ) and 2 possible substrate-capture proteins (S components, CbiM and CbiN) of unknown stoichimetry.

The protein resides in the cell membrane. The protein operates within cofactor biosynthesis; adenosylcobalamin biosynthesis. Functionally, part of the energy-coupling factor (ECF) transporter complex CbiMNOQ involved in cobalt import. The chain is Cobalt transport protein CbiM from Propionibacterium freudenreichii subsp. shermanii (strain ATCC 9614 / DSM 4902 / CIP 103027 / NCIMB 8099 / CIRM-BIA1).